A 556-amino-acid polypeptide reads, in one-letter code: Single-strand DNA-binding protein (556 aa).

Disordered stretches follow at residues 1–95 (MDPK…SEVE) and 527–556 (FVRPEPALPPISDSRRTYESRPRGPTVNSL). Polar residues-rich tracts occupy residues 10–25 (ENITETAAGNVETSDF) and 36–51 (VNSTGMSEIDMTGSQE). Basic and acidic residues-rich tracts occupy residues 52–73 (TPEHNMHGSPTHTDDLGPRLDA) and 539–548 (DSRRTYESRP).

In terms of assembly, interacts with host VIP2 that promotes T-DNA integration into the host genome. Forms a complex made of virE2 and host proteins VIP1 and VBF. Forms heterodimers with the chaperone protein virE1 that prevent virE2 anarchic homopolymerization. Interacts with A.thaliana VIP1 that mediates its translocation to the host nucleus. Forms a complex made of VirE2, host VIP1 and VIP2 and single-stranded DNA (ssDNA).

Its subcellular location is the secreted. The protein resides in the host nucleus. In terms of biological role, involved in DNA transformation; mediates the nuclear uptake of single-stranded DNA copies of the transferred DNA (T-DNA) element. Binds single-stranded but not double-stranded DNA regardless of nucleotide sequence composition. The polypeptide is Single-strand DNA-binding protein (virE2) (Agrobacterium fabrum (strain C58 / ATCC 33970) (Agrobacterium tumefaciens (strain C58))).